Reading from the N-terminus, the 137-residue chain is ATP synthase epsilon chain, chloroplastic (137 aa).

The protein belongs to the ATPase epsilon chain family. F-type ATPases have 2 components, CF(1) - the catalytic core - and CF(0) - the membrane proton channel. CF(1) has five subunits: alpha(3), beta(3), gamma(1), delta(1), epsilon(1). CF(0) has three main subunits: a, b and c.

It localises to the plastid. Its subcellular location is the chloroplast thylakoid membrane. Its function is as follows. Produces ATP from ADP in the presence of a proton gradient across the membrane. The protein is ATP synthase epsilon chain, chloroplastic of Pisum sativum (Garden pea).